We begin with the raw amino-acid sequence, 373 residues long: NK1 transcription factor-related protein 1 (373 aa).

Disordered stretches follow at residues 49–74, 149–231, and 281–328; these read ALPAESRETSPRHEPVPAGAPPTVHR, SDFT…RRAR, and KWKK…SMHT. The segment covering 53 to 63 has biased composition (basic and acidic residues); it reads ESRETSPRHEP. Residues 168–177 are compositionally biased toward polar residues; sequence EESSALTGNN. Over residues 196-210 the composition is skewed to low complexity; it reads GQQTQQSSSNGQNHQ. A DNA-binding region (homeobox) is located at residues 227 to 286; that stretch reads PRRARTAFTYEQLVALENKFKSTRYLSVCERLNLALSLSLTETQVKIWFQNRRTKWKKQN. Positions 296 to 310 are enriched in gly residues; the sequence is SGGGGGNGPSNGLGG.

This sequence belongs to the NK-1 homeobox family.

The protein localises to the nucleus. May participate in the energy homeostasis regulation. This chain is NK1 transcription factor-related protein 1, found in Danio rerio (Zebrafish).